A 219-amino-acid polypeptide reads, in one-letter code: Thiopurine S-methyltransferase (219 aa).

Trp10, Leu45, Glu66, and Arg123 together coordinate S-adenosyl-L-methionine.

The protein belongs to the class I-like SAM-binding methyltransferase superfamily. TPMT family.

The protein localises to the cytoplasm. It catalyses the reaction S-adenosyl-L-methionine + a thiopurine = S-adenosyl-L-homocysteine + a thiopurine S-methylether.. The sequence is that of Thiopurine S-methyltransferase from Bordetella petrii (strain ATCC BAA-461 / DSM 12804 / CCUG 43448).